A 123-amino-acid chain; its full sequence is Large ribosomal subunit protein uL18 (123 aa).

It belongs to the universal ribosomal protein uL18 family. As to quaternary structure, part of the 50S ribosomal subunit; part of the 5S rRNA/L5/L18/L25 subcomplex. Contacts the 5S and 23S rRNAs.

In terms of biological role, this is one of the proteins that bind and probably mediate the attachment of the 5S RNA into the large ribosomal subunit, where it forms part of the central protuberance. The sequence is that of Large ribosomal subunit protein uL18 from Chlamydia trachomatis serovar A (strain ATCC VR-571B / DSM 19440 / HAR-13).